Reading from the N-terminus, the 215-residue chain is Myelin protein zero-like protein 2 (215 aa).

The N-terminal stretch at 1–26 (MYGKSSTRAVLLLLGIQLTALWPIAA) is a signal peptide. The Ig-like V-type domain maps to 27–141 (VEIYTSRVLE…DGVIGEIRLS (115 aa)). At 27–154 (VEIYTSRVLE…TVRFSEIHFL (128 aa)) the chain is on the extracellular side. 2 N-linked (GlcNAc...) asparagine glycosylation sites follow: Asn39 and Asn118. The cysteines at positions 47 and 123 are disulfide-linked. A helical transmembrane segment spans residues 155–175 (ALAIGSACALMIIIVIVVVLF). At 176–215 (QHYRKKRWAERAHKVVEIKSKEEERLNQEKKVSVYLEDTD) the chain is on the cytoplasmic side.

This sequence belongs to the myelin P0 protein family. As to expression, widely expressed. In fetal tissues, highest expression in the inner ear. In adult tissues, highest levels in thymus and lung.

The protein resides in the membrane. Mediates homophilic cell-cell adhesion. This chain is Myelin protein zero-like protein 2 (MPZL2), found in Homo sapiens (Human).